The chain runs to 212 residues: Glycerol-3-phosphate acyltransferase (212 aa).

5 helical membrane-spanning segments follow: residues 3–23 (ILLAALVAYLIGSVSFAVIVS), 51–71 (KAAILTLVGDAFKGWLAVWLA), 78–98 (DVAVAWVAIAVFVGHLYPVFF), 115–135 (AVHPVLGLATALTWLIVAFFF), and 139–159 (SLAALVAAVFAPVFDVFLFGT).

The protein belongs to the PlsY family. Probably interacts with PlsX.

Its subcellular location is the cell inner membrane. It carries out the reaction an acyl phosphate + sn-glycerol 3-phosphate = a 1-acyl-sn-glycero-3-phosphate + phosphate. The protein operates within lipid metabolism; phospholipid metabolism. In terms of biological role, catalyzes the transfer of an acyl group from acyl-phosphate (acyl-PO(4)) to glycerol-3-phosphate (G3P) to form lysophosphatidic acid (LPA). This enzyme utilizes acyl-phosphate as fatty acyl donor, but not acyl-CoA or acyl-ACP. The polypeptide is Glycerol-3-phosphate acyltransferase (Burkholderia vietnamiensis (strain G4 / LMG 22486) (Burkholderia cepacia (strain R1808))).